A 335-amino-acid polypeptide reads, in one-letter code: uncharacterized protein (335 aa).

3 disordered regions span residues 153–174, 218–239, and 254–295; these read LNDKEDEEKLDQTTESEESDRI, HTSVRRSMSSVSSSASSTQEEV, and RCKV…PVTS. The span at 156 to 170 shows a compositional bias: acidic residues; it reads KEDEEKLDQTTESEE. 2 stretches are compositionally biased toward low complexity: residues 222-234 and 275-295; these read RRSMSSVSSSASS and THTSVSSLSVHSVSPTPPVTS.

This is an uncharacterized protein from Caenorhabditis elegans.